The primary structure comprises 431 residues: V-type ATP synthase beta chain (431 aa).

This sequence belongs to the ATPase alpha/beta chains family.

Produces ATP from ADP in the presence of a proton gradient across the membrane. The V-type beta chain is a regulatory subunit. This Treponema denticola (strain ATCC 35405 / DSM 14222 / CIP 103919 / JCM 8153 / KCTC 15104) protein is V-type ATP synthase beta chain.